The sequence spans 226 residues: tRNA (guanine-N(7)-)-methyltransferase (226 aa).

Positions 59, 84, 111, and 134 each coordinate S-adenosyl-L-methionine. Aspartate 134 is a catalytic residue. Lysine 138 lines the substrate pocket. The tract at residues 140–145 (RHNKRR) is interaction with RNA. Substrate-binding positions include aspartate 170 and 205-208 (TKFE).

It belongs to the class I-like SAM-binding methyltransferase superfamily. TrmB family.

The catalysed reaction is guanosine(46) in tRNA + S-adenosyl-L-methionine = N(7)-methylguanosine(46) in tRNA + S-adenosyl-L-homocysteine. It participates in tRNA modification; N(7)-methylguanine-tRNA biosynthesis. In terms of biological role, catalyzes the formation of N(7)-methylguanine at position 46 (m7G46) in tRNA. The sequence is that of tRNA (guanine-N(7)-)-methyltransferase from Chromobacterium violaceum (strain ATCC 12472 / DSM 30191 / JCM 1249 / CCUG 213 / NBRC 12614 / NCIMB 9131 / NCTC 9757 / MK).